The sequence spans 290 residues: 4-hydroxybenzoate octaprenyltransferase (290 aa).

Helical transmembrane passes span 23–43 (IGALLLLWPTLWALWVATPGV), 46–66 (LWILAVFVAGVWLMRAAGCVV), 99–119 (LFVVLVLISFLLVLTLNTMTI), 141–161 (LPQVVLGAAFGWSIPMAFAAV), 163–183 (ESVPLSCWLMFLANILWAVAY), 213–233 (LIIGILQIGVLALMAIIGELN), 234–254 (GLGWGYYWSIVVAGALFVYQQ), and 268–288 (AFMNNNYVGLVLFLGLAMSYW).

This sequence belongs to the UbiA prenyltransferase family. It depends on Mg(2+) as a cofactor.

The protein resides in the cell inner membrane. The catalysed reaction is all-trans-octaprenyl diphosphate + 4-hydroxybenzoate = 4-hydroxy-3-(all-trans-octaprenyl)benzoate + diphosphate. Its pathway is cofactor biosynthesis; ubiquinone biosynthesis. Its function is as follows. Catalyzes the prenylation of para-hydroxybenzoate (PHB) with an all-trans polyprenyl group. Mediates the second step in the final reaction sequence of ubiquinone-8 (UQ-8) biosynthesis, which is the condensation of the polyisoprenoid side chain with PHB, generating the first membrane-bound Q intermediate 3-octaprenyl-4-hydroxybenzoate. The protein is 4-hydroxybenzoate octaprenyltransferase of Escherichia coli (strain SE11).